We begin with the raw amino-acid sequence, 407 residues long: Putative glucose/galactose transporter (407 aa).

Transmembrane regions (helical) follow at residues Gly11 to Ile31, Leu47 to Ile67, Ile70 to Phe90, Phe96 to Leu116, Val139 to Phe159, Val180 to Leu200, Phe225 to Phe245, His263 to Met283, Ile300 to Phe320, Val321 to Gly341, Gly349 to Thr369, and Asn378 to Leu398.

This sequence belongs to the major facilitator superfamily. FHS transporter (TC 2.A.1.7) family.

It is found in the cell inner membrane. In terms of biological role, intake of glucose and galactose. This chain is Putative glucose/galactose transporter (gluP), found in Helicobacter pylori (strain J99 / ATCC 700824) (Campylobacter pylori J99).